We begin with the raw amino-acid sequence, 269 residues long: Eukaryotic translation initiation factor 3 subunit G-1 (269 aa).

The RRM domain occupies 188-266 (AAIRISNLSE…LILSVEWSKP (79 aa)). Ser-198 carries the phosphoserine modification.

This sequence belongs to the eIF-3 subunit G family. As to quaternary structure, component of the eukaryotic translation initiation factor 3 (eIF-3) complex. The eIF-3 complex interacts with pix.

It is found in the cytoplasm. Its function is as follows. RNA-binding component of the eukaryotic translation initiation factor 3 (eIF-3) complex, which is involved in protein synthesis of a specialized repertoire of mRNAs and, together with other initiation factors, stimulates binding of mRNA and methionyl-tRNAi to the 40S ribosome. The eIF-3 complex specifically targets and initiates translation of a subset of mRNAs involved in cell proliferation. This subunit can bind 18S rRNA. This is Eukaryotic translation initiation factor 3 subunit G-1 from Drosophila melanogaster (Fruit fly).